Consider the following 266-residue polypeptide: Thymidylate synthase (266 aa).

Arg24 is a dUMP binding site. His54 is a binding site for (6R)-5,10-methylene-5,6,7,8-tetrahydrofolate. A dUMP-binding site is contributed by 129 to 130 (RR). Cys149 (nucleophile) is an active-site residue. Residues 169–172 (RSAD), Asn180, and 210–212 (HIY) contribute to the dUMP site. Asp172 serves as a coordination point for (6R)-5,10-methylene-5,6,7,8-tetrahydrofolate. Ala265 contacts (6R)-5,10-methylene-5,6,7,8-tetrahydrofolate.

The protein belongs to the thymidylate synthase family. Bacterial-type ThyA subfamily. In terms of assembly, homodimer.

The protein resides in the cytoplasm. It carries out the reaction dUMP + (6R)-5,10-methylene-5,6,7,8-tetrahydrofolate = 7,8-dihydrofolate + dTMP. It participates in pyrimidine metabolism; dTTP biosynthesis. Its function is as follows. Catalyzes the reductive methylation of 2'-deoxyuridine-5'-monophosphate (dUMP) to 2'-deoxythymidine-5'-monophosphate (dTMP) while utilizing 5,10-methylenetetrahydrofolate (mTHF) as the methyl donor and reductant in the reaction, yielding dihydrofolate (DHF) as a by-product. This enzymatic reaction provides an intracellular de novo source of dTMP, an essential precursor for DNA biosynthesis. The sequence is that of Thymidylate synthase from Mycobacterium sp. (strain KMS).